The sequence spans 156 residues: Ribosomal RNA large subunit methyltransferase H (156 aa).

S-adenosyl-L-methionine contacts are provided by residues leucine 73, glycine 104, and 123–128 (VSSLTL).

It belongs to the RNA methyltransferase RlmH family. As to quaternary structure, homodimer.

The protein localises to the cytoplasm. The enzyme catalyses pseudouridine(1915) in 23S rRNA + S-adenosyl-L-methionine = N(3)-methylpseudouridine(1915) in 23S rRNA + S-adenosyl-L-homocysteine + H(+). In terms of biological role, specifically methylates the pseudouridine at position 1915 (m3Psi1915) in 23S rRNA. The chain is Ribosomal RNA large subunit methyltransferase H from Paraburkholderia phytofirmans (strain DSM 17436 / LMG 22146 / PsJN) (Burkholderia phytofirmans).